We begin with the raw amino-acid sequence, 950 residues long: Protein lin-54 homolog (950 aa).

Disordered regions lie at residues 1–63 (MDTS…DSLN), 366–387 (NASA…TSSG), 500–523 (ASKP…PRKH), 533–552 (KQSA…GPEA), and 638–702 (VENK…LPPG). Over residues 10–26 (SLDDTEPLPELSFEDFL) the composition is skewed to acidic residues. Residues 29 to 39 (TSEKSSQHMEI) are compositionally biased toward basic and acidic residues. Acidic residues predominate over residues 40–55 (EALDSEEDNIGGEDLA). Composition is skewed to low complexity over residues 366 to 386 (NASA…STSS), 500 to 516 (ASKP…PSAS), 535 to 548 (SASV…SSDA), and 661 to 682 (QQQS…QQQL). The CRC domain maps to 737–849 (RRKHCNCSKS…KCVGCRNMED (113 aa)).

This sequence belongs to the lin-54 family. In terms of assembly, component of the DREAM complex at least composed of Myb, Caf1-55, mip40, mip120, mip130, E2f2, Dp, Rbf, Rbf2, lin-52, HDAC1/Rpd3 and l(3)mbt.

The protein localises to the nucleus. Component of the DREAM complex, a multiprotein complex that can both act as a transcription activator or repressor depending on the context. In follicle cells, the complex plays a central role in the site-specific DNA replication at the chorion loci. During development, the complex represses transcription of developmentally controlled E2F target genes. The chain is Protein lin-54 homolog (mip120) from Drosophila melanogaster (Fruit fly).